The sequence spans 352 residues: tRNA-specific 2-thiouridylase MnmA (352 aa).

Residues 7–14 (GLSGGVDS) and Leu33 contribute to the ATP site. The active-site Nucleophile is the Cys94. A disulfide bond links Cys94 and Cys193. Gly119 serves as a coordination point for ATP. The interval 143-145 (KDQ) is interaction with tRNA. Cys193 acts as the Cysteine persulfide intermediate in catalysis. An interaction with tRNA region spans residues 298-299 (RY).

This sequence belongs to the MnmA/TRMU family.

It is found in the cytoplasm. It catalyses the reaction S-sulfanyl-L-cysteinyl-[protein] + uridine(34) in tRNA + AH2 + ATP = 2-thiouridine(34) in tRNA + L-cysteinyl-[protein] + A + AMP + diphosphate + H(+). Functionally, catalyzes the 2-thiolation of uridine at the wobble position (U34) of tRNA, leading to the formation of s(2)U34. The chain is tRNA-specific 2-thiouridylase MnmA from Nostoc sp. (strain PCC 7120 / SAG 25.82 / UTEX 2576).